We begin with the raw amino-acid sequence, 237 residues long: Probable F-box protein At1g53815 (237 aa).

Residues 41–72 (ISNILSRLPLKSKAKCRCVSKLWSSIIRRPNY) enclose the F-box domain.

The protein is Probable F-box protein At1g53815 of Arabidopsis thaliana (Mouse-ear cress).